Reading from the N-terminus, the 394-residue chain is Ornithine aminotransferase 1 (394 aa).

Position 252 is an N6-(pyridoxal phosphate)lysine (lysine 252).

It belongs to the class-III pyridoxal-phosphate-dependent aminotransferase family. OAT subfamily. Requires pyridoxal 5'-phosphate as cofactor.

The protein localises to the cytoplasm. The enzyme catalyses a 2-oxocarboxylate + L-ornithine = L-glutamate 5-semialdehyde + an L-alpha-amino acid. Its pathway is amino-acid biosynthesis; L-proline biosynthesis; L-glutamate 5-semialdehyde from L-ornithine: step 1/1. Catalyzes the interconversion of ornithine to glutamate semialdehyde. This chain is Ornithine aminotransferase 1, found in Staphylococcus saprophyticus subsp. saprophyticus (strain ATCC 15305 / DSM 20229 / NCIMB 8711 / NCTC 7292 / S-41).